The primary structure comprises 472 residues: Poly(A) polymerase catalytic subunit (472 aa).

Active-site residues include D191 and D193.

This sequence belongs to the poxviridae poly(A) polymerase catalytic subunit family. In terms of assembly, heterodimer of a large (catalytic) subunit and a small (regulatory) subunit.

It catalyses the reaction RNA(n) + ATP = RNA(n)-3'-adenine ribonucleotide + diphosphate. In terms of biological role, polymerase that creates the 3'-poly(A) tail of mRNA's. This is Poly(A) polymerase catalytic subunit (PAPL) from Capra hircus (Goat).